Reading from the N-terminus, the 356-residue chain is D-alanine--D-alanine ligase (356 aa).

One can recognise an ATP-grasp domain in the interval lysine 134–glutamate 339. Histidine 167 to glutamate 222 contributes to the ATP binding site. 3 residues coordinate Mg(2+): aspartate 293, glutamate 306, and asparagine 308.

It belongs to the D-alanine--D-alanine ligase family. It depends on Mg(2+) as a cofactor. The cofactor is Mn(2+).

It localises to the cytoplasm. It catalyses the reaction 2 D-alanine + ATP = D-alanyl-D-alanine + ADP + phosphate + H(+). Its pathway is cell wall biogenesis; peptidoglycan biosynthesis. Cell wall formation. The sequence is that of D-alanine--D-alanine ligase from Staphylococcus saprophyticus subsp. saprophyticus (strain ATCC 15305 / DSM 20229 / NCIMB 8711 / NCTC 7292 / S-41).